We begin with the raw amino-acid sequence, 152 residues long: Transcriptional regulator MraZ (152 aa).

SpoVT-AbrB domains lie at 5 to 52 and 81 to 124; these read ASAI…PVQE and AHEC…DEAA.

The protein belongs to the MraZ family. Forms oligomers.

The protein resides in the cytoplasm. The protein localises to the nucleoid. The chain is Transcriptional regulator MraZ from Shewanella piezotolerans (strain WP3 / JCM 13877).